The primary structure comprises 323 residues: AA9 family lytic polysaccharide monooxygenase B (323 aa).

The first 18 residues, 1–18 (MKSFTLTTLAALAGNAAA), serve as a signal peptide directing secretion. Cu(2+)-binding residues include histidine 19 and histidine 97. Cysteine 56 and cysteine 191 are disulfide-bonded. 2 residues coordinate O2: histidine 177 and glutamine 186. Tyrosine 188 contacts Cu(2+). Residues 286 to 323 (CTVQKYQQCGGQGYTGCTNCASGSTCSAVSPPYYSQCV) enclose the CBM1 domain.

This sequence belongs to the polysaccharide monooxygenase AA9 family. The cofactor is Cu(2+).

It is found in the secreted. It catalyses the reaction [(1-&gt;4)-beta-D-glucosyl]n+m + reduced acceptor + O2 = 4-dehydro-beta-D-glucosyl-[(1-&gt;4)-beta-D-glucosyl]n-1 + [(1-&gt;4)-beta-D-glucosyl]m + acceptor + H2O.. Its activity is regulated as follows. Is able to utilize various natural phenolic compounds as reducing agents. Most of these reducing agents are present in plants, either free or as lignin building blocks, such as sinapic acid, or as flavonoids such as catechin and dopamine. Phenolic compounds with 1,2-benzenediol and 1,2,3-benzenetriol moieties yield the highest release of oxidized and non-oxidized glucooligosaccharides from cellulose compared to monophenols or sulfur-containing compounds. Functionally, lytic polysaccharide monooxygenase (LPMO) that depolymerizes crystalline and amorphous polysaccharides via the oxidation of scissile alpha- or beta-(1-4)-glycosidic bonds, yielding C1 oxidation products. Catalysis by LPMOs requires the reduction of the active-site copper from Cu(II) to Cu(I) by a reducing agent and H(2)O(2) or O(2) as a cosubstrate. Is active on regenerated amorphous cellulose (RAC). In Thermothelomyces thermophilus (strain ATCC 42464 / BCRC 31852 / DSM 1799) (Sporotrichum thermophile), this protein is AA9 family lytic polysaccharide monooxygenase B.